We begin with the raw amino-acid sequence, 100 residues long: Urease subunit gamma (100 aa).

The protein belongs to the urease gamma subunit family. Heterotrimer of UreA (gamma), UreB (beta) and UreC (alpha) subunits. Three heterotrimers associate to form the active enzyme.

The protein resides in the cytoplasm. It carries out the reaction urea + 2 H2O + H(+) = hydrogencarbonate + 2 NH4(+). It functions in the pathway nitrogen metabolism; urea degradation; CO(2) and NH(3) from urea (urease route): step 1/1. In Rhizobium etli (strain ATCC 51251 / DSM 11541 / JCM 21823 / NBRC 15573 / CFN 42), this protein is Urease subunit gamma.